The sequence spans 1084 residues: Transcription elongation factor SPT5 (1084 aa).

A disordered region spans residues 1–91 (MSDSEDSDFS…DDEYEDEDPW (91 aa)). 3 stretches are compositionally biased toward acidic residues: residues 20–32 (AEEV…EEEQ), 41–62 (AEEE…EEDD), and 77–91 (DEAD…EDPW). The interaction with SUPT4H1 stretch occupies residues 175–269 (DPNLWTVKCK…TDVLKVVKEV (95 aa)). KOW domains follow at residues 272 to 305 (LKPK…ISLK), 419 to 450 (LQAG…ITIM), 471 to 502 (FRMG…VILF), and 593 to 626 (IHVK…LHCK). An interaction with RNA polymerase II region spans residues 312–419 (LDRIKARMSM…TTGKEREHNL (108 aa)). Residue Ser-665 is modified to Phosphoserine. The tract at residues 667-700 (RISSPMHPGGGGQPQRGGGGGGGGGMGRGRGRRD) is disordered. Positions 674–694 (PGGGGQPQRGGGGGGGGGMGR) are enriched in gly residues. Positions 702-735 (DLIGQTVRISQGPYKGYIGVVKDATESTARVELH) constitute a KOW 5 domain. Positions 748–973 (LTTVGGKERQ…HTPGSNIDQA (226 aa)) are disordered. A CTR1-1; approximate repeat occupies 758 to 763 (GRSSTH). Residues 758–815 (GRSSTHLRTPMYGSQTPIYGTGSRTPMYGSQTPLHDGSRTPHYGSQTPLHDGSRTPGQ) form an 8 X 7 AA approximate tandem repeats of G-S-[QR]-T-P-X-[YQ], motif CTR1 region. Positions 759-790 (RSSTHLRTPMYGSQTPIYGTGSRTPMYGSQTP) are enriched in polar residues. Residues 764–769 (LRTPMY) form a CTR1-2; approximate repeat. Residues 770-776 (GSQTPIY) form a CTR1-3 repeat. Residues Thr-773 and Thr-782 each carry the phosphothreonine; by CDK9 modification. The CTR1-4 repeat unit spans residues 779–785 (GSRTPMY). The CTR1-5 repeat unit spans residues 786–792 (GSQTPLH). Residues 794-800 (GSRTPHY) form a CTR1-6 repeat. The stretch at 801–807 (GSQTPLH) is one CTR1-7 repeat. Residues 809–815 (GSRTPGQ) form a CTR1-8 repeat. Over residues 832–842 (DEYEFAYDDEP) the composition is skewed to acidic residues. Residues 842-849 (PSPSPQGY) form a CTR2-1 repeat. The 10 X 8 AA approximate tandem repeats of P-[TS]-P-S-P-[QA]-[SG]-Y, motif CTR2 stretch occupies residues 842-948 (PSPSPQGYGG…ASPSPSPVGY (107 aa)). A CTR2-2; approximate repeat occupies 852-860 (TPNPQTPGY). The segment covering 855 to 864 (PQTPGYPEVP) has biased composition (pro residues). One copy of the CTR2-3; approximate repeat lies at 861–867 (PEVPSPQ). Residues 866–888 (PQVNPQYNPQTPGTPAMYNTDQY) show a composition bias toward polar residues. The stretch at 879–883 (TPAMY) is one CTR2-4; half-length repeat. A CTR2-5; approximate repeat occupies 894-900 (PSPQGSY). Residues 894–909 (PSPQGSYQPSPSPQSY) are compositionally biased toward low complexity. One copy of the CTR2-6 repeat lies at 902 to 909 (PSPSPQSY). Residues 914-919 (PSPVGY) form a CTR2-7; approximate repeat. Residues 922–928 (THSPASY) form a CTR2-8 repeat. A CTR2-9 repeat occupies 930–937 (PTPSPMAY). The CTR2-10 repeat unit spans residues 941–948 (PSPSPVGY).

Belongs to the SPT5 family. As to quaternary structure, interacts with SUPT4H1 to form the DSIF complex. DSIF interacts with RNA polymerase II and with the positive transcription elongation factor b complex (P-TEFb complex), which is composed of CDK9 and cyclin-T. Post-translationally, phosphorylated. Phosphorylation by P-TEFb (CDK9) at Thr residues of the C-terminal repeats alleviates transcriptional pausing and promotes transcription elongation.

Its subcellular location is the nucleus. In terms of biological role, component of the DRB sensitivity-inducing factor complex (DSIF complex), which regulates mRNA processing and transcription elongation by RNA polymerase II. DSIF positively regulates mRNA capping by stimulating the mRNA guanylyltransferase activity of RNGTT/CAP1A. DSIF also acts cooperatively with the negative elongation factor complex (NELF complex) to enhance transcriptional pausing at sites proximal to the promoter. Transcriptional pausing may facilitate the assembly of an elongation competent RNA polymerase II complex. DSIF and NELF promote pausing by inhibition of the transcription elongation factor TFIIS/S-II. TFIIS/S-II binds to RNA polymerase II at transcription pause sites and stimulates the weak intrinsic nuclease activity of the enzyme. Cleavage of blocked transcripts by RNA polymerase II promotes the resumption of transcription from the new 3' terminus and may allow repeated attempts at transcription through natural pause sites. Following phosphorylation by CDK9, DSIF can also positively regulate transcriptional elongation. Regulation of transcriptional elongation by this protein is required for the expression of genes which control neuronal development. The chain is Transcription elongation factor SPT5 (supt5h) from Danio rerio (Zebrafish).